We begin with the raw amino-acid sequence, 355 residues long: Peptide chain release factor 1 (355 aa).

N5-methylglutamine is present on Gln-233.

Belongs to the prokaryotic/mitochondrial release factor family. In terms of processing, methylated by PrmC. Methylation increases the termination efficiency of RF1.

It localises to the cytoplasm. Peptide chain release factor 1 directs the termination of translation in response to the peptide chain termination codons UAG and UAA. This chain is Peptide chain release factor 1, found in Bacillus cereus (strain ATCC 14579 / DSM 31 / CCUG 7414 / JCM 2152 / NBRC 15305 / NCIMB 9373 / NCTC 2599 / NRRL B-3711).